Consider the following 347-residue polypeptide: Anthranilate phosphoribosyltransferase (347 aa).

5-phospho-alpha-D-ribose 1-diphosphate-binding positions include Gly88, Gly91–Asp92, Thr96, Asn98–Thr101, Lys116–Ser124, and Ser128. Anthranilate is bound at residue Gly88. Ser100 is a Mg(2+) binding site. Residue Asn119 participates in anthranilate binding. Residue Arg174 coordinates anthranilate. Asp232 and Glu233 together coordinate Mg(2+).

Belongs to the anthranilate phosphoribosyltransferase family. Homodimer. Requires Mg(2+) as cofactor.

The enzyme catalyses N-(5-phospho-beta-D-ribosyl)anthranilate + diphosphate = 5-phospho-alpha-D-ribose 1-diphosphate + anthranilate. It participates in amino-acid biosynthesis; L-tryptophan biosynthesis; L-tryptophan from chorismate: step 2/5. Catalyzes the transfer of the phosphoribosyl group of 5-phosphorylribose-1-pyrophosphate (PRPP) to anthranilate to yield N-(5'-phosphoribosyl)-anthranilate (PRA). This is Anthranilate phosphoribosyltransferase from Shewanella oneidensis (strain ATCC 700550 / JCM 31522 / CIP 106686 / LMG 19005 / NCIMB 14063 / MR-1).